Reading from the N-terminus, the 57-residue chain is Preprotein translocase subunit SecG (57 aa).

Residues 1–33 (MARRRKYEGLNPFVAAGLIKFSEEGELERIKLN) lie on the Cytoplasmic side of the membrane. Residues 34–55 (PRTAILVSITVIIAILVLNILH) form a helical membrane-spanning segment. The Extracellular portion of the chain corresponds to 56 to 57 (PL).

The protein belongs to the SEC61-beta family. Component of the protein translocase complex. Heterotrimer consisting of alpha (SecY), beta (SecG) and gamma (SecE) subunits. Can form oligomers of the heterotrimer.

The protein resides in the cell membrane. Its function is as follows. Involved in protein export. The function of the beta subunit is unknown, but it may be involved in stabilization of the trimeric complex. This is Preprotein translocase subunit SecG from Pyrobaculum islandicum (strain DSM 4184 / JCM 9189 / GEO3).